The chain runs to 125 residues: Small ribosomal subunit protein uS13 (125 aa).

The interval 94 to 125 (SLPVRGQRTQTNARTRKGKRKTVAGKKKAVKK) is disordered. A compositionally biased stretch (basic residues) spans 107–125 (RTRKGKRKTVAGKKKAVKK).

The protein belongs to the universal ribosomal protein uS13 family. Part of the 30S ribosomal subunit. Forms a loose heterodimer with protein S19. Forms two bridges to the 50S subunit in the 70S ribosome.

Located at the top of the head of the 30S subunit, it contacts several helices of the 16S rRNA. In the 70S ribosome it contacts the 23S rRNA (bridge B1a) and protein L5 of the 50S subunit (bridge B1b), connecting the 2 subunits; these bridges are implicated in subunit movement. Contacts the tRNAs in the A and P-sites. The protein is Small ribosomal subunit protein uS13 of Prosthecochloris aestuarii (strain DSM 271 / SK 413).